The sequence spans 888 residues: MGQSVLRAVFFLVLGLLGHSHGGFPNTISIGGLFMRNTVQEHSAFRFAVQLYNTNQNTTEKPFHLNYHVDHLDSSNSFSVTNAFCSQFSRGVYAIFGFYDQMSMNTLTSFCGALHTSFVTPSFPTDADVQFVIQMRPALKGAILSLLGYYKWEKFVYLYDTERGFSILQAIMEAAVQNNWQVTARSVGNIKDIQEFRRIIEEMDRRQEKRYLIDCEVERINTILEQVVILGKHSRGYHYMLANLGFTDIVLERVMHGGANITGFQIVNNENPMVQQFIQRWVRLDEREFPEAKNAPLKYTSALTHDAILVIAEAFRYLRRQRVDVSRRGSAGDCLANPAVPWSQGIDIERALKMVQVQGMTGNIQFDTYGRRTNYTIDVYEMKVSGSRKAGYWNEYERFVPFSDQQISNDSSSSENRTIVVTTILESPYVMYKKNHEQLEGNERYEGYCVDLAYEIAKHVRIKYKLSIVGDGKYGARDPETKIWNGMVGELVYGRADIAVAPLTITLVREEVIDFSKPFMSLGISIMIKKPQKSKPGVFSFLDPLAYEIWMCIVFAYIGVSVVLFLVSRFSPYEWHLEDNNEEPRDPQSPPDPPNEFGIFNSLWFSLGAFMQQGCDISPRSLSGRIVGGVWWFFTLIIISSYTANLAAFLTVERMVSPIESAEDLAKQTEIAYGTLDSGSTKEFFRRSKIAVYEKMWSYMKSAEPSVFTKTTADGVARVRKSKGKFAFLLESTMNEYIEQRKPCDTMKVGGNLDSKGYGVATPKGSALRTPVNLAVLKLSEQGILDKLKNKWWYDKGECGAKDSGSKDKTSALSLSNVAGVFYILVGGLGLAMMVALIEFCYKSRAESKRMKLTKNTQNFKPAPATNTQNYATYREGYNVYGTESVKI.

A signal peptide spans 1 to 22 (MGQSVLRAVFFLVLGLLGHSHG). Topologically, residues 23–546 (GFPNTISIGG…GVFSFLDPLA (524 aa)) are extracellular. N-linked (GlcNAc...) asparagine glycans are attached at residues asparagine 57, asparagine 260, asparagine 374, asparagine 409, and asparagine 416. Cysteines 85 and 334 form a disulfide. Residues proline 502, threonine 504, and arginine 509 each coordinate L-glutamate. Residues 547-567 (YEIWMCIVFAYIGVSVVLFLV) traverse the membrane as a helical segment. The Cytoplasmic segment spans residues 568–596 (SRFSPYEWHLEDNNEEPRDPQSPPDPPNE). The helical; Pore-forming intramembrane region spans 597–612 (FGIFNSLWFSLGAFMQ). An intramembrane segment occupies 613–615 (QGC). Cysteine 615 carries the S-palmitoyl cysteine lipid modification. Topologically, residues 616 to 621 (DISPRS) are cytoplasmic. Residues 622-642 (LSGRIVGGVWWFFTLIIISSY) traverse the membrane as a helical segment. Residues 643–817 (TANLAAFLTV…DKTSALSLSN (175 aa)) lie on the Extracellular side of the membrane. 3 residues coordinate L-glutamate: serine 680, threonine 681, and glutamate 731. Residues cysteine 744 and cysteine 799 are joined by a disulfide bond. Residues 818 to 838 (VAGVFYILVGGLGLAMMVALI) traverse the membrane as a helical segment. The Cytoplasmic portion of the chain corresponds to 839–888 (EFCYKSRAESKRMKLTKNTQNFKPAPATNTQNYATYREGYNVYGTESVKI). A lipid anchor (S-palmitoyl cysteine) is attached at cysteine 841. Phosphotyrosine is present on residues tyrosine 871 and tyrosine 881.

This sequence belongs to the glutamate-gated ion channel (TC 1.A.10.1) family. GRIA3 subfamily. In terms of assembly, homotetramer or heterotetramer of pore-forming glutamate receptor subunits. Tetramers may be formed by the dimerization of dimers. Interacts with PICK1, GRIP1 and GRIP2. Found in a complex with GRIA1, GRIA2, GRIA4, CNIH2, CNIH3, CACNG2, CACNG3, CACNG4, CACNG5, CACNG7 and CACNG8. Interacts with CACNG5. Found in a complex with GRIA1, GRIA2, GRIA4, DLG4, CACNG8 and CNIH2.

Its subcellular location is the cell membrane. The protein resides in the postsynaptic cell membrane. It is found in the postsynaptic density membrane. It carries out the reaction Ca(2+)(in) = Ca(2+)(out). Its function is as follows. Ionotropic glutamate receptor that functions as a ligand-gated cation channel, gated by L-glutamate and glutamatergic agonists such as alpha-amino-3-hydroxy-5-methyl-4-isoxazolepropionic acid (AMPA), quisqualic acid, and kainic acid. L-glutamate acts as an excitatory neurotransmitter at many synapses in the central nervous system and plays an important role in fast excitatory synaptic transmission by inducing long-term potentiation. Binding of the excitatory neurotransmitter L-glutamate induces a conformation change, leading to the opening of the cation channel, and thereby converts the chemical signal to an electrical impulse upon entry of calcium. The receptor then desensitizes rapidly and enters a transient inactive state, characterized by the presence of bound agonist. In the presence of CACNG8, shows resensitization which is characterized by a delayed accumulation of current flux upon continued application of glutamate. The chain is Glutamate receptor 3 from Mus musculus (Mouse).